A 218-amino-acid polypeptide reads, in one-letter code: Cytidylate kinase (218 aa).

11 to 19 (GPGASGKGT) contributes to the ATP binding site.

Belongs to the cytidylate kinase family. Type 1 subfamily.

It localises to the cytoplasm. It carries out the reaction CMP + ATP = CDP + ADP. The enzyme catalyses dCMP + ATP = dCDP + ADP. This chain is Cytidylate kinase, found in Neisseria gonorrhoeae (strain ATCC 700825 / FA 1090).